The chain runs to 473 residues: Trehalose-6-phosphate synthase (473 aa).

Arginine 10 is a D-glucose 6-phosphate binding site. UDP-alpha-D-glucose is bound at residue glycine 21–glycine 22. D-glucose 6-phosphate-binding residues include tyrosine 76 and aspartate 130. Positions 262 and 267 each coordinate UDP-alpha-D-glucose. Arginine 300 contacts D-glucose 6-phosphate. UDP-alpha-D-glucose-binding positions include phenylalanine 339 and leucine 365 to glutamate 369.

Belongs to the glycosyltransferase 20 family. As to quaternary structure, homotetramer.

The enzyme catalyses D-glucose 6-phosphate + UDP-alpha-D-glucose = alpha,alpha-trehalose 6-phosphate + UDP + H(+). Its pathway is glycan biosynthesis; trehalose biosynthesis. Its function is as follows. Probably involved in the osmoprotection via the biosynthesis of trehalose. Catalyzes the transfer of glucose from UDP-alpha-D-glucose (UDP-Glc) to D-glucose 6-phosphate (Glc-6-P) to form trehalose-6-phosphate. Acts with retention of the anomeric configuration of the UDP-sugar donor. The protein is Trehalose-6-phosphate synthase (otsA) of Salmonella arizonae (strain ATCC BAA-731 / CDC346-86 / RSK2980).